Consider the following 636-residue polypeptide: MSFELELKRIRDEIVQNLPPEITVTKIEFEGPEIAVYSESEDVAAIETSSTLKDLAKVMRKRVVFRWNVDKRKDPAETKDYIMNLISKDAEIGEITFDHTRGEVIIESGKPGLVIGKKGINLKEIRTNTFWQPKTIRTPPLPSRTIQLIRGMLKKERQTQKDILLEIGKRIHRPALFNNLNIRMNALGGFREVGRSCILMQTRDSNVLLDVGLNVGNPNDRFPYFFVPQFSIRDLDAVIISHSHLDHCGVVPFLYKYGYRGPIYCTLPTRNLSTMLQLDFIQICDKEGTPSPYSKRDVKNAVLHTIPLSWGKVTDIAPDIKLTLHNSGHILGSSMIHLHFGKGDYNFVYTGDFKYQKTRLLEKATVKFPRVEGLLIEATYGGPQDRIPSRQESEKELKQILNSTLKRGGKVLIPVLAVGRAQELLIVLEEYISSGFIDKVPVYIDGLISEATAIHTANPDFLSSDLREKILHQGKNPFLSDFFETVSSQDERADIIGGGPCIILATSGMLIGGPSVHYLKALAEDSKNTLIFVSYQVSGTLGSRIIRGFREFNYIDWKGRTQLVKIGLKVFTLEGFSGHSSRSQISQFLRRIQPRPKVVIVNHGEESKCVSLSTMIHKKLRKSTKSPKNLEVVLLK.

Residues 4–72 are KHa; sequence ELELKRIRDE…VVFRWNVDKR (69 aa). The tract at residues 73 to 140 is KHb; the sequence is KDPAETKDYI…WQPKTIRTPP (68 aa). The tract at residues 181-383 is metallo-beta-lactamase N-terminus; it reads NIRMNALGGF…LLIEATYGGP (203 aa). Residues His242, His244, Asp246, His247, His329, and Asp352 each contribute to the Zn(2+) site. Residues 384–577 are beta-Casp; the sequence is QDRIPSRQES…LKVFTLEGFS (194 aa). Residues 578–636 are metallo-beta-lactamase C-terminus; that stretch reads GHSSRSQISQFLRRIQPRPKVVIVNHGEESKCVSLSTMIHKKLRKSTKSPKNLEVVLLK. Residue His603 participates in Zn(2+) binding.

It belongs to the metallo-beta-lactamase superfamily. RNA-metabolizing metallo-beta-lactamase-like family. FttA subfamily. As to quaternary structure, homodimer. Interacts with RNA polymerase (RNAP), interacts with the Spt4-Spt5 complex. Requires Zn(2+) as cofactor.

Its function is as follows. Terminates transcription on the whole genome. Termination is linked to FttA-mediated RNA cleavage and does not require NTP hydrolysis. Cleaves endonucleolytically at the RNA exit channel of RNA polymerase (RNAP); the 5'-3' exonuclease activity of this protein degrades the nascent RNA released from RNAP. Terminates transcription genome-wide in M.maripaludis. Restores wild-type growth to a strain of Methanococcus maripaludis depleted for this gene at 22 degrees Celsius and prevents transcriptional read-through. Transcription termination is most effective in vivo on RNAs with more than one U4-tract in their 3'-ends. Has endonuclease activity after U-rich tracts in transcription termination sequences. The polypeptide is Transcription termination factor FttA (Lokiarchaeum sp. (strain GC14_75)).